The sequence spans 255 residues: Cytochrome c oxidase subunit 2 (255 aa).

Positions 1-16 (MFNLFPPFGANTAIFN) are cleaved as a signal peptide. Residues 17–43 (DAPQPWQVGFQDGASPTQEGITELHDS) are Mitochondrial intermembrane-facing. Residues 44–64 (IFFYLVIICFGVLWVLSSVIV) form a helical membrane-spanning segment. At 65–80 (NFNSNKSQLVYKYANH) the chain is on the mitochondrial matrix side. Residues 81–101 (GTLIELIWTITPALVLIAIAF) form a helical membrane-spanning segment. Topologically, residues 102–255 (PSFKLLYLMD…KYLAWIDSQA (154 aa)) are mitochondrial intermembrane. 6 residues coordinate Cu cation: H189, C224, E226, C228, H232, and M235. E226 is a binding site for Mg(2+).

Belongs to the cytochrome c oxidase subunit 2 family. In terms of assembly, component of the cytochrome c oxidase (complex IV, CIV), a multisubunit enzyme composed of a catalytic core of 3 subunits and several supernumerary subunits. The complex exists as a monomer or a dimer and forms supercomplexes (SCs) in the inner mitochondrial membrane with ubiquinol-cytochrome c oxidoreductase (cytochrome b-c1 complex, complex III, CIII). Cu cation is required as a cofactor.

The protein resides in the mitochondrion inner membrane. The enzyme catalyses 4 Fe(II)-[cytochrome c] + O2 + 8 H(+)(in) = 4 Fe(III)-[cytochrome c] + 2 H2O + 4 H(+)(out). Its function is as follows. Component of the cytochrome c oxidase, the last enzyme in the mitochondrial electron transport chain which drives oxidative phosphorylation. The respiratory chain contains 3 multisubunit complexes succinate dehydrogenase (complex II, CII), ubiquinol-cytochrome c oxidoreductase (cytochrome b-c1 complex, complex III, CIII) and cytochrome c oxidase (complex IV, CIV), that cooperate to transfer electrons derived from NADH and succinate to molecular oxygen, creating an electrochemical gradient over the inner membrane that drives transmembrane transport and the ATP synthase. Cytochrome c oxidase is the component of the respiratory chain that catalyzes the reduction of oxygen to water. Electrons originating from reduced cytochrome c in the intermembrane space (IMS) are transferred via the dinuclear copper A center (CU(A)) of subunit 2 and heme A of subunit 1 to the active site in subunit 1, a binuclear center (BNC) formed by heme A3 and copper B (CU(B)). The BNC reduces molecular oxygen to 2 water molecules using 4 electrons from cytochrome c in the IMS and 4 protons from the mitochondrial matrix. In Mycosarcoma maydis (Corn smut fungus), this protein is Cytochrome c oxidase subunit 2 (COX2).